A 134-amino-acid chain; its full sequence is uncharacterized protein (134 aa).

Helical transmembrane passes span 8-28 (FTSL…TVMY), 54-74 (GFQA…TFLL), and 113-133 (LACF…RLVD).

The protein belongs to the cornichon family.

Its subcellular location is the endoplasmic reticulum membrane. This is an uncharacterized protein from Schizosaccharomyces pombe (strain 972 / ATCC 24843) (Fission yeast).